A 137-amino-acid polypeptide reads, in one-letter code: Peptide methionine sulfoxide reductase MsrB (137 aa).

The 123-residue stretch at 7–129 folds into the MsrB domain; sequence AEELKKNLSD…NSASLRFTDG (123 aa). C46, C49, C95, and C98 together coordinate Zn(2+). C118 (nucleophile) is an active-site residue.

The protein belongs to the MsrB Met sulfoxide reductase family. Requires Zn(2+) as cofactor.

The catalysed reaction is L-methionyl-[protein] + [thioredoxin]-disulfide + H2O = L-methionyl-(R)-S-oxide-[protein] + [thioredoxin]-dithiol. The chain is Peptide methionine sulfoxide reductase MsrB from Shigella dysenteriae serotype 1 (strain Sd197).